Reading from the N-terminus, the 149-residue chain is Alpha-crystallin A chain (149 aa).

Positions 41 to 149 (LFRSVLESGI…DPTHSERPIP (109 aa)) constitute a sHSP domain. The Zn(2+) site is built by His89, Glu91, His96, and His143.

Belongs to the small heat shock protein (HSP20) family. In terms of assembly, heteropolymer composed of three CRYAA and one CRYAB subunits. Inter-subunit bridging via zinc ions enhances stability, which is crucial as there is no protein turn over in the lens. Can also form homodimers and homotetramers (dimers of dimers) which serve as the building blocks of homooligomers. Within homooligomers, the zinc-binding motif is created from residues of 3 different molecules. His-89 and Glu-91 from one molecule are ligands of the zinc ion, and His-96 and His-143 residues from additional molecules complete the site with tetrahedral coordination geometry.

Its subcellular location is the cytoplasm. It is found in the nucleus. In terms of biological role, contributes to the transparency and refractive index of the lens. May act as a chaperone, preventing aggregation of various proteins under a wide range of stress conditions. The chain is Alpha-crystallin A chain (CRYAA) from Anas platyrhynchos (Mallard).